The sequence spans 344 residues: Arginine N-succinyltransferase (344 aa).

Leu125 contacts succinyl-CoA. The active-site Proton donor is His229.

It belongs to the arginine N-succinyltransferase family.

It carries out the reaction succinyl-CoA + L-arginine = N(2)-succinyl-L-arginine + CoA + H(+). It functions in the pathway amino-acid degradation; L-arginine degradation via AST pathway; L-glutamate and succinate from L-arginine: step 1/5. Catalyzes the transfer of succinyl-CoA to arginine to produce N(2)-succinylarginine. In Salmonella typhi, this protein is Arginine N-succinyltransferase.